Here is a 2504-residue protein sequence, read N- to C-terminus: Fatty acid synthase (2504 aa).

Position 1 is an N-acetylmethionine (Met-1). The 406-residue stretch at 1–406 (MEEVVIAGMS…GSNVHVILQP (406 aa)) folds into the Ketosynthase family 3 (KS3) domain. Residue Lys-59 is modified to N6-acetyllysine. Phosphoserine is present on Ser-63. Lys-70 is modified (N6-acetyllysine). The active-site For beta-ketoacyl synthase activity is Cys-161. The residue at position 207 (Ser-207) is a Phosphoserine. His-293 acts as the For beta-ketoacyl synthase activity in catalysis. An N6-acetyllysine modification is found at Lys-298. The active-site For beta-ketoacyl synthase activity is His-331. Positions 429-817 (RTLEAVQDLL…INVNPNALFP (389 aa)) are acyl and malonyl transferases. Position 528 is an N6-acetyllysine (Lys-528). Ser-581 acts as the For malonyltransferase activity in catalysis. An acyl-CoA is bound by residues 647–648 (DT) and Phe-671. N6-acetyllysine is present on Lys-673. Phosphoserine is present on Ser-725. Arg-773 provides a ligand contact to an acyl-CoA. The residue at position 790 (Lys-790) is an N6-acetyllysine. Positions 844-967 (VPVAEDFPNG…VYLWEDPNSK (124 aa)) are N-terminal hotdog fold. The 261-residue stretch at 844–1104 (VPVAEDFPNG…ISRLQTTATS (261 aa)) folds into the PKS/mFAS DH domain. His-878 serves as the catalytic Proton acceptor; for dehydratase activity. The interval 982–1104 (SVSRLTQGEV…ISRLQTTATS (123 aa)) is C-terminal hotdog fold. N6-acetyllysine is present on Lys-993. Asp-1032 acts as the Proton donor; for dehydratase activity in catalysis. Residues Lys-1071 and Lys-1276 each carry the N6-acetyllysine modification. An S-nitrosocysteine modification is found at Cys-1464. Phosphoserine is present on residues Ser-1577 and Ser-1587. The tract at residues 1628–1856 (DVPSSWTLEE…VQVREEEPEA (229 aa)) is enoyl reductase. Residue 1664-1681 (VLIHSGSGGVGQAAISIA) coordinates NADP(+). N6-(pyridoxal phosphate)lysine; alternate is present on Lys-1697. Lys-1697 is modified (N6-acetyllysine; alternate). N6-acetyllysine occurs at positions 1764 and 1840. Residues 1857 to 2111 (VLPGAQPTLI…FVLAEKKAVA (255 aa)) form a beta-ketoacyl reductase region. 1879-1894 (SYIITGGLGGFGLELA) is a binding site for NADP(+). An N6-acetyllysine modification is found at Lys-1988. Position 2084 is an S-nitrosocysteine (Cys-2084). The 81-residue stretch at 2112–2192 (HGDGDTQRDL…EMSSKTDSAT (81 aa)) folds into the Carrier domain. Ser-2150 carries the post-translational modification O-(pantetheine 4'-phosphoryl)serine; alternate. Ser-2150 is modified (phosphoserine; alternate). The disordered stretch occupies residues 2181–2205 (LQEMSSKTDSATDTTAPKSRSDTSL). Over residues 2185–2198 (SSKTDSATDTTAPK) the composition is skewed to low complexity. Phosphoserine occurs at positions 2190 and 2229. The interval 2201–2504 (SDTSLKQNQL…AEPRVSVREG (304 aa)) is thioesterase. The active-site For thioesterase activity is the Ser-2301. The residue at position 2384 (Lys-2384) is an N6-acetyllysine. Lys-2442 participates in a covalent cross-link: Glycyl lysine isopeptide (Lys-Gly) (interchain with G-Cter in SUMO2). His-2474 functions as the For thioesterase activity in the catalytic mechanism.

Homodimer which is arranged in a head to tail fashion. Interacts with CEACAM1; this interaction is insulin and phosphorylation-dependent; reduces fatty-acid synthase activity. In terms of processing, S-nitrosylation of Fatty acid synthase at cysteine residues Cys-1464 or Cys-2084 is important for the enzyme dimerization. In adipocytes, S-nitrosylation of Fatty acid synthase occurs under physiological conditions and gradually increases during adipogenesis.

It localises to the cytoplasm. It is found in the melanosome. It carries out the reaction acetyl-CoA + n malonyl-CoA + 2n NADPH + 2n H(+) = a long-chain fatty acid + (n+1) CoA + n CO2 + 2n NADP(+).. It catalyses the reaction holo-[ACP] + acetyl-CoA = acetyl-[ACP] + CoA. The enzyme catalyses holo-[ACP] + malonyl-CoA = malonyl-[ACP] + CoA. The catalysed reaction is a fatty acyl-[ACP] + malonyl-[ACP] + H(+) = a 3-oxoacyl-[ACP] + holo-[ACP] + CO2. It carries out the reaction a (3R)-hydroxyacyl-[ACP] + NADP(+) = a 3-oxoacyl-[ACP] + NADPH + H(+). It catalyses the reaction a (3R)-hydroxyacyl-[ACP] = a (2E)-enoyl-[ACP] + H2O. The enzyme catalyses a 2,3-saturated acyl-[ACP] + NADP(+) = a (2E)-enoyl-[ACP] + NADPH + H(+). The catalysed reaction is hexadecanoyl-[ACP] + H2O = hexadecanoate + holo-[ACP] + H(+). It carries out the reaction acetyl-[ACP] + malonyl-[ACP] + H(+) = 3-oxobutanoyl-[ACP] + holo-[ACP] + CO2. It catalyses the reaction 3-oxobutanoyl-[ACP] + NADPH + H(+) = (3R)-hydroxybutanoyl-[ACP] + NADP(+). The enzyme catalyses (3R)-hydroxybutanoyl-[ACP] = (2E)-butenoyl-[ACP] + H2O. The catalysed reaction is (2E)-butenoyl-[ACP] + NADPH + H(+) = butanoyl-[ACP] + NADP(+). It carries out the reaction butanoyl-[ACP] + malonyl-[ACP] + H(+) = 3-oxohexanoyl-[ACP] + holo-[ACP] + CO2. It catalyses the reaction 3-oxohexanoyl-[ACP] + NADPH + H(+) = (3R)-hydroxyhexanoyl-[ACP] + NADP(+). The enzyme catalyses (3R)-hydroxyhexanoyl-[ACP] = (2E)-hexenoyl-[ACP] + H2O. The catalysed reaction is (2E)-hexenoyl-[ACP] + NADPH + H(+) = hexanoyl-[ACP] + NADP(+). It carries out the reaction hexanoyl-[ACP] + malonyl-[ACP] + H(+) = 3-oxooctanoyl-[ACP] + holo-[ACP] + CO2. It catalyses the reaction 3-oxooctanoyl-[ACP] + NADPH + H(+) = (3R)-hydroxyoctanoyl-[ACP] + NADP(+). The enzyme catalyses (3R)-hydroxyoctanoyl-[ACP] = (2E)-octenoyl-[ACP] + H2O. The catalysed reaction is (2E)-octenoyl-[ACP] + NADPH + H(+) = octanoyl-[ACP] + NADP(+). It carries out the reaction octanoyl-[ACP] + malonyl-[ACP] + H(+) = 3-oxodecanoyl-[ACP] + holo-[ACP] + CO2. It catalyses the reaction 3-oxodecanoyl-[ACP] + NADPH + H(+) = (3R)-hydroxydecanoyl-[ACP] + NADP(+). The enzyme catalyses (3R)-hydroxydecanoyl-[ACP] = (2E)-decenoyl-[ACP] + H2O. The catalysed reaction is (2E)-decenoyl-[ACP] + NADPH + H(+) = decanoyl-[ACP] + NADP(+). It carries out the reaction decanoyl-[ACP] + malonyl-[ACP] + H(+) = 3-oxododecanoyl-[ACP] + holo-[ACP] + CO2. It catalyses the reaction 3-oxododecanoyl-[ACP] + NADPH + H(+) = (3R)-hydroxydodecanoyl-[ACP] + NADP(+). The enzyme catalyses (3R)-hydroxydodecanoyl-[ACP] = (2E)-dodecenoyl-[ACP] + H2O. The catalysed reaction is (2E)-dodecenoyl-[ACP] + NADPH + H(+) = dodecanoyl-[ACP] + NADP(+). It carries out the reaction dodecanoyl-[ACP] + malonyl-[ACP] + H(+) = 3-oxotetradecanoyl-[ACP] + holo-[ACP] + CO2. It catalyses the reaction 3-oxotetradecanoyl-[ACP] + NADPH + H(+) = (3R)-hydroxytetradecanoyl-[ACP] + NADP(+). The enzyme catalyses (3R)-hydroxytetradecanoyl-[ACP] = (2E)-tetradecenoyl-[ACP] + H2O. The catalysed reaction is (2E)-tetradecenoyl-[ACP] + NADPH + H(+) = tetradecanoyl-[ACP] + NADP(+). It carries out the reaction tetradecanoyl-[ACP] + malonyl-[ACP] + H(+) = 3-oxohexadecanoyl-[ACP] + holo-[ACP] + CO2. It catalyses the reaction 3-oxohexadecanoyl-[ACP] + NADPH + H(+) = (3R)-hydroxyhexadecanoyl-[ACP] + NADP(+). The enzyme catalyses (3R)-hydroxyhexadecanoyl-[ACP] = (2E)-hexadecenoyl-[ACP] + H2O. The catalysed reaction is (2E)-hexadecenoyl-[ACP] + NADPH + H(+) = hexadecanoyl-[ACP] + NADP(+). It carries out the reaction hexadecanoyl-[ACP] + malonyl-[ACP] + H(+) = 3-oxooctadecanoyl-[ACP] + holo-[ACP] + CO2. It catalyses the reaction 3-oxooctadecanoyl-[ACP] + NADPH + H(+) = (3R)-hydroxyoctadecanoyl-[ACP] + NADP(+). The enzyme catalyses (3R)-hydroxyoctadecanoyl-[ACP] = (2E)-octadecenoyl-[ACP] + H2O. The catalysed reaction is (2E)-octadecenoyl-[ACP] + NADPH + H(+) = octadecanoyl-[ACP] + NADP(+). It carries out the reaction tetradecanoyl-[ACP] + H2O = tetradecanoate + holo-[ACP] + H(+). It participates in lipid metabolism; fatty acid biosynthesis. Its function is as follows. Fatty acid synthetase is a multifunctional enzyme that catalyzes the de novo biosynthesis of long-chain saturated fatty acids starting from acetyl-CoA and malonyl-CoA in the presence of NADPH. This multifunctional protein contains 7 catalytic activities and a site for the binding of the prosthetic group 4'-phosphopantetheine of the acyl carrier protein ([ACP]) domain. This Mus musculus (Mouse) protein is Fatty acid synthase (Fasn).